Reading from the N-terminus, the 182-residue chain is Endoribonuclease YbeY (182 aa).

Residues His120, His124, and His130 each contribute to the Zn(2+) site. The interval 157 to 182 is disordered; it reads RGVSFAPKPTGAGAFPSAADRDDTQN.

This sequence belongs to the endoribonuclease YbeY family. The cofactor is Zn(2+).

It is found in the cytoplasm. Its function is as follows. Single strand-specific metallo-endoribonuclease involved in late-stage 70S ribosome quality control and in maturation of the 3' terminus of the 16S rRNA. In Corynebacterium jeikeium (strain K411), this protein is Endoribonuclease YbeY.